The chain runs to 209 residues: uncharacterized protein (209 aa).

This is an uncharacterized protein from Klebsiella pneumoniae.